The sequence spans 71 residues: Protein SlyX homolog (71 aa).

It belongs to the SlyX family.

The polypeptide is Protein SlyX homolog (Azotobacter vinelandii (strain DJ / ATCC BAA-1303)).